A 26-amino-acid chain; its full sequence is Ribulose bisphosphate carboxylase large chain (26 aa).

Residues 1 to 2 (MS) constitute a propeptide that is removed on maturation. Position 3 is an N-acetylproline (P3).

Belongs to the RuBisCO large chain family. Type I subfamily. As to quaternary structure, heterohexadecamer of 8 large chains and 8 small chains.

Its subcellular location is the plastid. The protein localises to the chloroplast. It catalyses the reaction 2 (2R)-3-phosphoglycerate + 2 H(+) = D-ribulose 1,5-bisphosphate + CO2 + H2O. It carries out the reaction D-ribulose 1,5-bisphosphate + O2 = 2-phosphoglycolate + (2R)-3-phosphoglycerate + 2 H(+). Its function is as follows. RuBisCO catalyzes two reactions: the carboxylation of D-ribulose 1,5-bisphosphate, the primary event in carbon dioxide fixation, as well as the oxidative fragmentation of the pentose substrate in the photorespiration process. Both reactions occur simultaneously and in competition at the same active site. This is Ribulose bisphosphate carboxylase large chain (rbcL) from Vicia faba (Broad bean).